A 406-amino-acid chain; its full sequence is Phosphopentomutase (406 aa).

Residues Asp-10, Asp-305, His-310, Asp-346, His-347, and His-358 each contribute to the Mn(2+) site.

Belongs to the phosphopentomutase family. Requires Mn(2+) as cofactor.

It localises to the cytoplasm. It catalyses the reaction 2-deoxy-alpha-D-ribose 1-phosphate = 2-deoxy-D-ribose 5-phosphate. It carries out the reaction alpha-D-ribose 1-phosphate = D-ribose 5-phosphate. The protein operates within carbohydrate degradation; 2-deoxy-D-ribose 1-phosphate degradation; D-glyceraldehyde 3-phosphate and acetaldehyde from 2-deoxy-alpha-D-ribose 1-phosphate: step 1/2. Functionally, isomerase that catalyzes the conversion of deoxy-ribose 1-phosphate (dRib-1-P) and ribose 1-phosphate (Rib-1-P) to deoxy-ribose 5-phosphate (dRib-5-P) and ribose 5-phosphate (Rib-5-P), respectively. The polypeptide is Phosphopentomutase (Vibrio cholerae serotype O1 (strain ATCC 39315 / El Tor Inaba N16961)).